The sequence spans 361 residues: 3-dehydroquinate synthase (361 aa).

Residues Asn-41, 70-75, 104-108, 128-129, Lys-141, Lys-150, 150-151, and 168-171 each bind NAD(+); these read DGEQYK, GVIGD, TT, KN, and CLTT. Zn(2+) is bound by residues Glu-183, His-246, and His-263.

It belongs to the sugar phosphate cyclases superfamily. Dehydroquinate synthase family. NAD(+) serves as cofactor. Requires Co(2+) as cofactor. Zn(2+) is required as a cofactor.

The protein localises to the cytoplasm. It catalyses the reaction 7-phospho-2-dehydro-3-deoxy-D-arabino-heptonate = 3-dehydroquinate + phosphate. Its pathway is metabolic intermediate biosynthesis; chorismate biosynthesis; chorismate from D-erythrose 4-phosphate and phosphoenolpyruvate: step 2/7. Its function is as follows. Catalyzes the conversion of 3-deoxy-D-arabino-heptulosonate 7-phosphate (DAHP) to dehydroquinate (DHQ). This Vibrio cholerae serotype O1 (strain ATCC 39315 / El Tor Inaba N16961) protein is 3-dehydroquinate synthase.